A 922-amino-acid chain; its full sequence is Band 3 anion transport protein (922 aa).

Disordered regions lie at residues 1 to 36 (MEGP…TMSN) and 355 to 389 (QHPD…LRTR). At 1–416 (MEGPGQDTED…LSDIRDALNP (416 aa)) the chain is on the cytoplasmic side. The segment covering 10-26 (DALRRSLDPEGYEDTKG) has biased composition (basic and acidic residues). A compositionally biased stretch (polar residues) spans 27–36 (SRTSLGTMSN). Residues 417–440 (QCLAAVIFIYFAALSPAITFGGLL) form a helical membrane-spanning segment. Topologically, residues 441–448 (GEKTRGMM) are extracellular. A helical transmembrane segment spans residues 449–469 (GVSELLLSTSVQCLLFSLLSA). Topologically, residues 470–472 (QPL) are cytoplasmic. The chain crosses the membrane as a discontinuously helical span at residues 473 to 489 (LVVGFSGPLLVFEEAFF). The Extracellular segment spans residues 490 to 498 (RFCEDHGLE). The helical transmembrane segment at 499-519 (YIVGRVWIGFWLILLVLLVVA) threads the bilayer. The Cytoplasmic segment spans residues 520–531 (CEGTVLVRYLSR). A helical transmembrane segment spans residues 532 to 554 (YTQEIFSFLISLIFIYETFAKLV). The Extracellular portion of the chain corresponds to 555 to 581 (TIFEAHPLQQSYDTDVSTEPSVPKPNT). Residues 582–602 (ALLSLVLMAGTFFLALFLRQF) form a helical membrane-spanning segment. The Cytoplasmic segment spans residues 603 to 613 (KNSVFLPGKVR). Residues 614-634 (RLIGDFGVPISIFVMALADFF) traverse the membrane as a helical segment. The Extracellular portion of the chain corresponds to 635 to 674 (IKDTYTQKLKVPRGLEVTNGTARGWFIHPMGSATPFPIWM). A glycan (N-linked (GlcNAc...) asparagine) is linked at N653. A helical membrane pass occupies residues 675 to 695 (MFASPVPALLVFILIFLETQI). Over 696–711 (TTLIVSKPERKLVKGS) the chain is Cytoplasmic. Residues 712 to 730 (GFHLDLLLIVAMGGLAALF) traverse the membrane as a helical segment. A discontinuously helical transmembrane segment spans residues 731 to 748 (GMPWLSATTVRTITHANA). The Cytoplasmic segment spans residues 749–771 (LTVVGKSAVPGERAHIVEVKEQR). 2 helical membrane-spanning segments follow: residues 772–792 (LSGL…PILK) and 793–811 (YIPL…VTSL). Topologically, residues 812–849 (FGIQLFDRILLLLMPPKYHPKEPYVTRVKTWRITSSPL) are cytoplasmic. Positions 850–880 (TQILVVALLWGVKVSPASLRCPFVLVLTVPL) form an intramembrane region, discontinuously helical. The Cytoplasmic portion of the chain corresponds to 881–922 (RRLLLPRIFSEIELKCLDTDDAVVTFEEAEGQDVYNEVQMPS).

Belongs to the anion exchanger (TC 2.A.31) family. A dimer in solution, it spans the membrane asymmetrically and appears to be tetrameric. In terms of tissue distribution, erythrocytes.

It localises to the cell membrane. It is found in the basolateral cell membrane. The enzyme catalyses hydrogencarbonate(in) + chloride(out) = hydrogencarbonate(out) + chloride(in). Functions both as a transporter that mediates electroneutral anion exchange across the cell membrane and as a structural protein. Major integral membrane glycoprotein of the erythrocyte membrane; required for normal flexibility and stability of the erythrocyte membrane and for normal erythrocyte shape via the interactions of its cytoplasmic domain with cytoskeletal proteins, glycolytic enzymes, and hemoglobin. Functions as a transporter that mediates the 1:1 exchange of inorganic anions across the erythrocyte membrane. Mediates chloride-bicarbonate exchange in the kidney, and is required for normal acidification of the urine. This is Band 3 anion transport protein (SLC4A1) from Gallus gallus (Chicken).